The following is a 64-amino-acid chain: Large ribosomal subunit protein bL35 (64 aa).

Disordered regions lie at residues 1 to 22 (MPKA…TGKI) and 34 to 64 (EHKP…LLNG). The segment covering 34–46 (EHKPTTRTRRLEG) has biased composition (basic and acidic residues). Positions 50-64 (VSANDTKRVNSLLNG) are enriched in polar residues.

The protein belongs to the bacterial ribosomal protein bL35 family.

This chain is Large ribosomal subunit protein bL35, found in Mycolicibacterium paratuberculosis (strain ATCC BAA-968 / K-10) (Mycobacterium paratuberculosis).